Here is a 189-residue protein sequence, read N- to C-terminus: Small ribosomal subunit protein uS5 (189 aa).

One can recognise an S5 DRBM domain in the interval 23 to 86 (FIDKLVHINR…ESAKREMIYV (64 aa)).

This sequence belongs to the universal ribosomal protein uS5 family. Part of the 30S ribosomal subunit. Contacts proteins S4 and S8.

In terms of biological role, with S4 and S12 plays an important role in translational accuracy. Its function is as follows. Located at the back of the 30S subunit body where it stabilizes the conformation of the head with respect to the body. In Bartonella bacilliformis (strain ATCC 35685 / KC583 / Herrer 020/F12,63), this protein is Small ribosomal subunit protein uS5.